The sequence spans 808 residues: Sucrose synthase (808 aa).

A GT-B glycosyltransferase region spans residues 271-753 (MLFRIALISP…GIERVYSTYT (483 aa)).

This sequence belongs to the glycosyltransferase 1 family. In terms of assembly, probably a homotetramer.

It carries out the reaction an NDP-alpha-D-glucose + D-fructose = a ribonucleoside 5'-diphosphate + sucrose + H(+). The catalysed reaction is ADP-alpha-D-glucose + D-fructose = sucrose + ADP + H(+). Its function is as follows. Catalyzes the reversible conversion of sucrose and a nucleotide disphosphate (NDP) into fructose and NDP-glucose; although the reaction is freely reversible in vitro, the physiological reaction seems to be sucrose cleavage. Unlike characterized plant enzymes prefers ADP as a cosubstrate, whereas plants prefer UDP. Its preference for ADP over UDP suggests it may directly link sucrose and glycogen metabolism. This is Sucrose synthase from Thermosynechococcus vestitus (strain NIES-2133 / IAM M-273 / BP-1).